The following is a 440-amino-acid chain: Phosphatidylcholine-sterol acyltransferase (440 aa).

A signal peptide spans 1–24; sequence MGLPGSPWQWVLLLLGLLLPPATS. The N-linked (GlcNAc...) asparagine glycan is linked to asparagine 44. Cysteine 74 and cysteine 98 form a disulfide bridge. Asparagine 108 is a glycosylation site (N-linked (GlcNAc...) asparagine). Serine 205 serves as the catalytic Nucleophile. Asparagine 296 carries an N-linked (GlcNAc...) asparagine glycan. A disulfide bond links cysteine 337 and cysteine 380. The active-site Charge relay system is the aspartate 369. Asparagine 397 is a glycosylation site (N-linked (GlcNAc...) asparagine). Histidine 401 acts as the Charge relay system in catalysis. A glycan (N-linked (GlcNAc...) asparagine) is linked at asparagine 408.

Belongs to the AB hydrolase superfamily. Lipase family. In terms of tissue distribution, detected in blood plasma (at protein level).

The protein localises to the secreted. It catalyses the reaction a sterol + a 1,2-diacyl-sn-glycero-3-phosphocholine = a sterol ester + a 1-acyl-sn-glycero-3-phosphocholine. The enzyme catalyses a 1-O-alkyl-2-acetyl-sn-glycero-3-phosphocholine + H2O = a 1-O-alkyl-sn-glycero-3-phosphocholine + acetate + H(+). It carries out the reaction 1-hexadecanoyl-2-(9Z,12Z-octadecadienoyl)-sn-glycero-3-phosphocholine + H2O = (9Z,12Z)-octadecadienoate + 1-hexadecanoyl-sn-glycero-3-phosphocholine + H(+). The catalysed reaction is 1-hexadecanoyl-2-(5Z,8Z,11Z,14Z-eicosatetraenoyl)-sn-glycero-3-phosphocholine + H2O = 1-hexadecanoyl-sn-glycero-3-phosphocholine + (5Z,8Z,11Z,14Z)-eicosatetraenoate + H(+). It catalyses the reaction 1-hexadecanoyl-2-(5Z,8Z,11Z,14Z-eicosatetraenoyl)-sn-glycero-3-phosphocholine + cholesterol = cholesteryl (5Z,8Z,11Z,14Z)-eicosatetraenoate + 1-hexadecanoyl-sn-glycero-3-phosphocholine. The enzyme catalyses 1-hexadecanoyl-2-(9Z-octadecenoyl)-sn-glycero-3-phosphocholine + cholesterol = cholesteryl (9Z-octadecenoate) + 1-hexadecanoyl-sn-glycero-3-phosphocholine. It carries out the reaction a 1-hexadecanoyl-2-acyl-sn-glycero-3-phosphocholine + (24S)-hydroxycholesterol = (24S)-24-hydroxycholesterol ester + 1-hexadecanoyl-sn-glycero-3-phosphocholine. The catalysed reaction is (24S)-hydroxycholesterol + 1-hexadecanoyl-2-(9Z,12Z-octadecadienoyl)-sn-glycero-3-phosphocholine = (24S)-hydroxycholesterol 3-linoleoate + 1-hexadecanoyl-sn-glycero-3-phosphocholine. It catalyses the reaction 1-hexadecanoyl-2-(8Z,11Z,14Z-eicosatrienoyl)-sn-glycero-3-phosphocholine + cholesterol = cholesteryl (8Z,11Z,14Z)-eicosatrienoate + 1-hexadecanoyl-sn-glycero-3-phosphocholine. The enzyme catalyses 1-hexadecanoyl-2-(5Z,8Z,11Z-eicosatrienoyl)-sn-glycero-3-phosphocholine + cholesterol = cholesteryl (5Z,8Z,11Z)-eicosatrienoate + 1-hexadecanoyl-sn-glycero-3-phosphocholine. It carries out the reaction 1-hexadecanoyl-2-(5Z,8Z,11Z,14Z,17Z-eicosapentaenoyl)-sn-glycero-3-phosphocholine + cholesterol = (5Z,8Z,11Z,14Z,17Z-eicosapentaenoyl)-cholesterol + 1-hexadecanoyl-sn-glycero-3-phosphocholine. The catalysed reaction is 1-hexadecanoyl-2-(9Z,12Z-octadecadienoyl)-sn-glycero-3-phosphocholine + cholesterol = cholesteryl (9Z,12Z)-octadecadienoate + 1-hexadecanoyl-sn-glycero-3-phosphocholine. It catalyses the reaction 1-hexadecanoyl-2-(6Z,9Z,12Z-octadecatrienoyl)-sn-glycero-3-phosphocholine + cholesterol = (6Z,9Z,12Z-octadecatrienoyl)-cholesterol + 1-hexadecanoyl-sn-glycero-3-phosphocholine. The enzyme catalyses 1-hexadecanoyl-2-(11Z,14Z,17Z-eicosatrienoyl)-sn-glycero-3-phosphocholine + cholesterol = (11Z,14Z,17Z-eicosatrienoyl)-cholesterol + 1-hexadecanoyl-sn-glycero-3-phosphocholine. It carries out the reaction 1-hexadecanoyl-2-(9Z,12Z,15Z-octadecatrienoyl)-sn-glycero-3-phosphocholine + cholesterol = (9Z,12Z,15Z-octadecatrienoyl)-cholesterol + 1-hexadecanoyl-sn-glycero-3-phosphocholine. The catalysed reaction is a 1-O-alkyl-2-acetyl-sn-glycero-3-phosphocholine + 1-hexadecanoyl-sn-glycero-3-phosphocholine = 1-hexadecanoyl-2-acetyl-sn-glycero-3-phosphocholine + a 1-O-alkyl-sn-glycero-3-phosphocholine. Central enzyme in the extracellular metabolism of plasma lipoproteins. Synthesized mainly in the liver and secreted into plasma where it converts cholesterol and phosphatidylcholines (lecithins) to cholesteryl esters and lysophosphatidylcholines on the surface of high and low density lipoproteins (HDLs and LDLs). The cholesterol ester is then transported back to the liver. Also produced in the brain by primary astrocytes, and esterifies free cholesterol on nascent APOE-containing lipoproteins secreted from glia and influences cerebral spinal fluid (CSF) APOE- and APOA1 levels. Together with APOE and the cholesterol transporter ABCA1, plays a key role in the maturation of glial-derived, nascent lipoproteins. Required for remodeling high-density lipoprotein particles into their spherical forms. Has a preference for plasma 16:0-18:2 or 18:O-18:2 phosphatidylcholines. Catalyzes the hydrolysis of 1-O-alkyl-2-acetyl-sn-glycero-3-phosphocholine (platelet-activating factor or PAF) to 1-O-alkyl-sn-glycero-3-phosphocholine (lyso-PAF). Also catalyzes the transfer of the acetate group from PAF to 1-hexadecanoyl-sn-glycero-3-phosphocholine forming lyso-PAF. Catalyzes the esterification of (24S)-hydroxycholesterol (24(S)OH-C), also known as cerebrosterol to produce 24(S)OH-C monoesters. The sequence is that of Phosphatidylcholine-sterol acyltransferase (Lcat) from Rattus norvegicus (Rat).